The sequence spans 620 residues: MPVLQKRINKDTFGEILERVSSRMSGWREKTLSFAGRLTLTKAVLSSMPVHSMSTILLPQSILNRLDQLSRTFLWGSTAEKKKQHLVKWSKVCSPKKEGGLGVRAAKSMNRALISKVGWRLLQEKNSLWTLVLQKKYHVGEIRDSRWLIPKGSWSSTWRSIAIGLRDVVSHGVGWIPGDGQQIRFWTDRWVSGKPLLELDNGERPTDCDTVVAKDLWIPGRGWDFAKIDPYTTNNTRLELRAVVLDLVTGARDRLSWKFSQDGQFSVRSAYEMLTVDEVPRPNMASFFNCLWKVRVPERVKTFLWLVGNQAVMTEEERHRRHLSASNVCQVCKGGVESMLHVLRDCPAQLGIWVRVVPQRRQQGFFSKSLFEWLYDNLGDRSGCEDIPWSTIFAVIIWWGWKWRCGNIFGENTKCRDRVKFVKEWAVEVYRAHSGNVLVGITQPRVERMIGWVSPCVGWVKVNTDGASRGNPGLASAGGVLRDCTGAWCGGFSLNIGRCSAPQAELWGVYYGLYFAWEKKVPRVELEVDSEVIVGFLKTGISDSHPLSFLVRLCHGFLQKDWLVRIVHVYREANRLADGLANYAFSLSLGFHSFDLVPDAMSSLLREDTLGSTRPRRVRL.

In terms of domain architecture, RNase H type-1 spans 456–586; it reads CVGWVKVNTD…ADGLANYAFS (131 aa). Positions 465, 505, 529, and 578 each coordinate Mg(2+).

Requires Mg(2+) as cofactor.

The enzyme catalyses Endonucleolytic cleavage to 5'-phosphomonoester.. The polypeptide is Putative ribonuclease H protein At1g65750 (Arabidopsis thaliana (Mouse-ear cress)).